The following is a 369-amino-acid chain: Endoglucanase (369 aa).

A signal peptide spans 1 to 22; sequence MMTMLRGWITMIVMLTAINAQA. The active-site Proton donor is the Glu-56. Catalysis depends on Asp-117, which acts as the Nucleophile.

Belongs to the glycosyl hydrolase 8 (cellulase D) family.

Its subcellular location is the secreted. It catalyses the reaction Endohydrolysis of (1-&gt;4)-beta-D-glucosidic linkages in cellulose, lichenin and cereal beta-D-glucans.. Its pathway is glycan metabolism; bacterial cellulose biosynthesis. Its function is as follows. Hydrolyzes carboxymethylcellulose. This Salmonella typhi protein is Endoglucanase (bcsZ).